The following is a 286-amino-acid chain: ATP synthase gamma chain (286 aa).

It belongs to the ATPase gamma chain family. In terms of assembly, F-type ATPases have 2 components, CF(1) - the catalytic core - and CF(0) - the membrane proton channel. CF(1) has five subunits: alpha(3), beta(3), gamma(1), delta(1), epsilon(1). CF(0) has three main subunits: a, b and c.

The protein localises to the cell inner membrane. Its function is as follows. Produces ATP from ADP in the presence of a proton gradient across the membrane. The gamma chain is believed to be important in regulating ATPase activity and the flow of protons through the CF(0) complex. The chain is ATP synthase gamma chain from Christiangramia forsetii (strain DSM 17595 / CGMCC 1.15422 / KT0803) (Gramella forsetii).